Here is a 560-residue protein sequence, read N- to C-terminus: Ribonuclease J 1 (560 aa).

Positions 76, 78, 80, 81, 144, and 166 each coordinate Zn(2+). Residue 366 to 370 participates in substrate binding; the sequence is HTSGH. A Zn(2+)-binding site is contributed by His392.

Belongs to the metallo-beta-lactamase superfamily. RNA-metabolizing metallo-beta-lactamase-like family. Bacterial RNase J subfamily. As to quaternary structure, homodimer, may be a subunit of the RNA degradosome. Zn(2+) is required as a cofactor.

It is found in the cytoplasm. In terms of biological role, an RNase that has 5'-3' exonuclease and possibly endonuclease activity. Involved in maturation of rRNA and in some organisms also mRNA maturation and/or decay. Has an overlapping but not completely redundant role with RNase J2 in the decay of mRNA. This is Ribonuclease J 1 from Streptococcus pyogenes serotype M3 (strain ATCC BAA-595 / MGAS315).